We begin with the raw amino-acid sequence, 474 residues long: Glutamate--tRNA ligase (474 aa).

A 'HIGH' region motif is present at residues 9–19 (PSPTGYLHVGG). The 'KMSKS' region motif lies at 240–244 (KLSKR). Lysine 243 contributes to the ATP binding site.

This sequence belongs to the class-I aminoacyl-tRNA synthetase family. Glutamate--tRNA ligase type 1 subfamily. Monomer.

It is found in the cytoplasm. The enzyme catalyses tRNA(Glu) + L-glutamate + ATP = L-glutamyl-tRNA(Glu) + AMP + diphosphate. Catalyzes the attachment of glutamate to tRNA(Glu) in a two-step reaction: glutamate is first activated by ATP to form Glu-AMP and then transferred to the acceptor end of tRNA(Glu). In Vibrio cholerae serotype O1 (strain ATCC 39315 / El Tor Inaba N16961), this protein is Glutamate--tRNA ligase.